Consider the following 119-residue polypeptide: Large ribosomal subunit protein uL14 (119 aa).

The protein belongs to the universal ribosomal protein uL14 family. Part of the 50S ribosomal subunit. Forms a cluster with proteins L3 and L19. In the 70S ribosome, L14 and L19 interact and together make contacts with the 16S rRNA in bridges B5 and B8.

Binds to 23S rRNA. Forms part of two intersubunit bridges in the 70S ribosome. This Wolbachia sp. subsp. Brugia malayi (strain TRS) protein is Large ribosomal subunit protein uL14.